The primary structure comprises 497 residues: Cysteine desulfurase, mitochondrial (497 aa).

The N-terminal 33 residues, 1–33 (MLKSTATRSITRLSQVYNVPAATYRACLVSRRF), are a transit peptide targeting the mitochondrion. Pyridoxal 5'-phosphate is bound by residues 168–169 (AT), N248, Q276, and 296–298 (SSH). The residue at position 299 (K299) is an N6-(pyridoxal phosphate)lysine. A pyridoxal 5'-phosphate-binding site is contributed by T336. C421 functions as the Cysteine persulfide intermediate in the catalytic mechanism. C421 lines the [2Fe-2S] cluster pocket.

Belongs to the class-V pyridoxal-phosphate-dependent aminotransferase family. NifS/IscS subfamily. It depends on pyridoxal 5'-phosphate as a cofactor.

Its subcellular location is the mitochondrion. The enzyme catalyses (sulfur carrier)-H + L-cysteine = (sulfur carrier)-SH + L-alanine. Catalyzes the removal of elemental sulfur from cysteine to produce alanine. It supplies the inorganic sulfur for iron-sulfur (Fe-S) clusters. Plays a role in both tRNA-processing and mitochondrial metabolism. Involved in the 2-thio-modification of both 5-carboxymethylaminomethyl-2-thiouridine in mitochondrial tRNAs and 5-methoxycarbonylmethyl-2-thiouridine (mcm5s2U) in cytoplasmic tRNAs. This Saccharomyces cerevisiae (strain ATCC 204508 / S288c) (Baker's yeast) protein is Cysteine desulfurase, mitochondrial.